Consider the following 1172-residue polypeptide: Phytochrome B (1172 aa).

Gly residues predominate over residues 1–16 (MVSGVGGSGGGRGGGR). Residues 1-54 (MVSGVGGSGGGRGGGRGGEEEPSSSHTPNNRRGGEQAQSSGTKSLRPRSNTESM) are disordered. Positions 24–54 (SSHTPNNRRGGEQAQSSGTKSLRPRSNTESM) are enriched in polar residues. One can recognise a GAF domain in the interval 252-433 (DIKLLCDTVV…AFGLQLNMEL (182 aa)). A phytochromobilin-binding site is contributed by cysteine 357. 2 consecutive PAS domains span residues 652–723 (VARE…LRGD) and 786–857 (DYKA…MIVL). Positions 934–1153 (YICQVIKNPL…LIILELPVPR (220 aa)) constitute a Histidine kinase domain.

This sequence belongs to the phytochrome family. As to quaternary structure, homodimer. Interacts with ADO1 and PKS4. Stabilized by interactions with PAPP5 and FYPP3 which are enhanced in the phosphorylated Pfr form. Interacts with VOZ1 and VOZ2. Binds, via its photosensory domain, to PTAC12/HMR/PAP5 when photoactivated; this interaction stimulates its localization to photobodies. Interacts with CRY1 specifically when in the dark/far-red (Pr) state, but not when red light-activated (Pfr). Interacts with PIF4 and PIF5 in response to low blue light (LBL). Component of a red light-dependent nuclear complex made of PHL, PHYB and CO. Interacts directly with PHL. Binds to UNE10/PIF8 when red light-activated (Pfr). When light-activated, interacts with PCH1 and PCHL. Associated with DRT111/RSN2/SFPS, SMP2 and SWAP1 in nuclear photobodies upon response to red light (Pfr form). In terms of processing, contains one covalently linked phytochromobilin chromophore. As to expression, expressed in fruits, flowers, leaves, stems, seedlings and roots.

The protein resides in the cytoplasm. The protein localises to the nucleus. Its subcellular location is the nucleoplasm. It is found in the nucleus speckle. Its function is as follows. Regulatory photoreceptor which exists in two forms that are reversibly interconvertible by light: the Pr form that absorbs maximally in the red region of the spectrum and the Pfr form that absorbs maximally in the far-red region. Photoconversion of Pr to Pfr induces an array of morphogenetic responses, whereas reconversion of Pfr to Pr cancels the induction of those responses. Pfr controls the expression of a number of nuclear genes including those encoding the small subunit of ribulose-bisphosphate carboxylase, chlorophyll A/B binding protein, protochlorophyllide reductase, rRNA, etc. It also controls the expression of its own gene(s) in a negative feedback fashion. Involved in the flowering time regulation. Involved in light-regulated circadian phase control that triggers stomatal aperture, stomatal conductance, and CO(2) assimilation. Implicated in red light perception, and, to a lower extent, in blue light signaling. Controls thermomorphogenesis in the daytime and regulates temperature responses by associating with the promoters of key target genes in a temperature-dependent manner and subsequently repressing their expression in a PIF4-dependent manner (temperature-responsive transcriptional regulator); this process requires PTAC12/HMR/PAP5 (transcriptional activator). Thermal timer that integrates temperature information over the course of the night. Detabilizes UNE10/PIF8 in red light. The chain is Phytochrome B from Arabidopsis thaliana (Mouse-ear cress).